The following is a 139-amino-acid chain: Large ribosomal subunit protein uL13 (139 aa).

Belongs to the universal ribosomal protein uL13 family. In terms of assembly, part of the 50S ribosomal subunit.

In terms of biological role, this protein is one of the early assembly proteins of the 50S ribosomal subunit, although it is not seen to bind rRNA by itself. It is important during the early stages of 50S assembly. The protein is Large ribosomal subunit protein uL13 of Nitratiruptor sp. (strain SB155-2).